Here is a 156-residue protein sequence, read N- to C-terminus: Putative pre-16S rRNA nuclease (156 aa).

The protein belongs to the YqgF nuclease family.

The protein resides in the cytoplasm. In terms of biological role, could be a nuclease involved in processing of the 5'-end of pre-16S rRNA. This is Putative pre-16S rRNA nuclease from Bartonella tribocorum (strain CIP 105476 / IBS 506).